We begin with the raw amino-acid sequence, 30 residues long: Cycloviolacin-O7 (30 aa).

Residues 1-30 (SIPCGESCVWIPCTITALAGCKCKSKVCYN) constitute a cross-link (cyclopeptide (Ser-Asn)). 3 disulfides stabilise this stretch: Cys-4-Cys-21, Cys-8-Cys-23, and Cys-13-Cys-28.

Post-translationally, this is a cyclic peptide.

Probably participates in a plant defense mechanism. This Viola odorata (Sweet violet) protein is Cycloviolacin-O7.